A 485-amino-acid chain; its full sequence is Delta(14)-sterol reductase ERG24A (485 aa).

The next 4 helical transmembrane spans lie at 18 to 38, 77 to 97, 131 to 151, and 155 to 175; these read FFGP…VYVF, GLVS…SLIL, LAVL…WTFM, and FIQI…FVYV. N-linked (GlcNAc...) asparagine glycosylation occurs at Asn-240. The next 4 helical transmembrane spans lie at 259–279, 285–305, 319–339, and 431–451; these read ILIT…EPAI, ITTD…VPYV, SLGP…FYIF, and AQGW…ILLI.

The protein belongs to the ERG4/ERG24 family.

It localises to the endoplasmic reticulum membrane. It carries out the reaction 4,4-dimethyl-5alpha-cholesta-8,24-dien-3beta-ol + NADP(+) = 4,4-dimethyl-5alpha-cholesta-8,14,24-trien-3beta-ol + NADPH + H(+). It functions in the pathway steroid metabolism; ergosterol biosynthesis. Its function is as follows. Delta(14)-sterol reductase; part of the third module of ergosterol biosynthesis pathway that includes the late steps of the pathway. Catalyzes the reduction of the C14=C15 double bond within 4,4,24-trimethyl ergosta-8,14,24(28)-trienolto produce 4,4-dimethylfecosterol. The third module or late pathway involves the ergosterol synthesis itself through consecutive reactions that mainly occur in the endoplasmic reticulum (ER) membrane. Firstly, the squalene synthase ERG9 catalyzes the condensation of 2 farnesyl pyrophosphate moieties to form squalene, which is the precursor of all steroids. Squalene synthase is crucial for balancing the incorporation of farnesyl diphosphate (FPP) into sterol and nonsterol isoprene synthesis. Secondly, squalene is converted into lanosterol by the consecutive action of the squalene epoxidase ERG1 and the lanosterol synthase ERG7. Then, the delta(24)-sterol C-methyltransferase ERG6 methylates lanosterol at C-24 to produce eburicol. Eburicol is the substrate of the sterol 14-alpha demethylase encoded by CYP51A, CYP51B and CYP51C, to yield 4,4,24-trimethyl ergosta-8,14,24(28)-trienol. CYP51B encodes the enzyme primarily responsible for sterol 14-alpha-demethylation, and plays an essential role in ascospore formation. CYP51A encodes an additional sterol 14-alpha-demethylase, induced on ergosterol depletion and responsible for the intrinsic variation in azole sensitivity. The third CYP51 isoform, CYP51C, does not encode a sterol 14-alpha-demethylase, but is required for full virulence on host wheat ears. The C-14 reductase ERG24 then reduces the C14=C15 double bond which leads to 4,4-dimethylfecosterol. A sequence of further demethylations at C-4, involving the C-4 demethylation complex containing the C-4 methylsterol oxidases ERG25, the sterol-4-alpha-carboxylate 3-dehydrogenase ERG26 and the 3-keto-steroid reductase ERG27, leads to the production of fecosterol via 4-methylfecosterol. ERG28 has a role as a scaffold to help anchor ERG25, ERG26 and ERG27 to the endoplasmic reticulum. The C-8 sterol isomerase ERG2 then catalyzes the reaction which results in unsaturation at C-7 in the B ring of sterols and thus converts fecosterol to episterol. The sterol-C5-desaturases ERG3A and ERG3BB then catalyze the introduction of a C-5 double bond in the B ring to produce 5-dehydroepisterol. The C-22 sterol desaturases ERG5A and ERG5B further convert 5-dehydroepisterol into ergosta-5,7,22,24(28)-tetraen-3beta-ol by forming the C-22(23) double bond in the sterol side chain. Finally, ergosta-5,7,22,24(28)-tetraen-3beta-ol is substrate of the C-24(28) sterol reductase ERG4 to produce ergosterol. In Gibberella zeae (strain ATCC MYA-4620 / CBS 123657 / FGSC 9075 / NRRL 31084 / PH-1) (Wheat head blight fungus), this protein is Delta(14)-sterol reductase ERG24A.